The sequence spans 360 residues: UDP-N-acetylglucosamine--N-acetylmuramyl-(pentapeptide) pyrophosphoryl-undecaprenol N-acetylglucosamine transferase (360 aa).

UDP-N-acetyl-alpha-D-glucosamine is bound by residues 16 to 18, Asn128, Arg165, Ser191, Ile247, 266 to 271, and Gln292; these read TGG and ALTVSE.

This sequence belongs to the glycosyltransferase 28 family. MurG subfamily.

Its subcellular location is the cell inner membrane. The catalysed reaction is di-trans,octa-cis-undecaprenyl diphospho-N-acetyl-alpha-D-muramoyl-L-alanyl-D-glutamyl-meso-2,6-diaminopimeloyl-D-alanyl-D-alanine + UDP-N-acetyl-alpha-D-glucosamine = di-trans,octa-cis-undecaprenyl diphospho-[N-acetyl-alpha-D-glucosaminyl-(1-&gt;4)]-N-acetyl-alpha-D-muramoyl-L-alanyl-D-glutamyl-meso-2,6-diaminopimeloyl-D-alanyl-D-alanine + UDP + H(+). It participates in cell wall biogenesis; peptidoglycan biosynthesis. In terms of biological role, cell wall formation. Catalyzes the transfer of a GlcNAc subunit on undecaprenyl-pyrophosphoryl-MurNAc-pentapeptide (lipid intermediate I) to form undecaprenyl-pyrophosphoryl-MurNAc-(pentapeptide)GlcNAc (lipid intermediate II). The polypeptide is UDP-N-acetylglucosamine--N-acetylmuramyl-(pentapeptide) pyrophosphoryl-undecaprenol N-acetylglucosamine transferase (Shewanella amazonensis (strain ATCC BAA-1098 / SB2B)).